We begin with the raw amino-acid sequence, 290 residues long: uncharacterized protein (290 aa).

2 disordered regions span residues 105 to 156 and 259 to 290; these read LKHK…KLTV and EGAQRDRFPGRKQPGVHEEPVLKKWPKLKSKK. Positions 114–130 are enriched in polar residues; that stretch reads KATQQARKRNFISSKSK. Basic and acidic residues-rich tracts occupy residues 143-156 and 261-280; these read RESKESSKEKKLTV and AQRDRFPGRKQPGVHEEPVL.

This is an uncharacterized protein from Homo sapiens (Human).